Consider the following 100-residue polypeptide: UPF0213 protein YhbQ (100 aa).

Residues 2-77 (TPWYLYLIRT…KQLTKRQKER (76 aa)) form the GIY-YIG domain.

It belongs to the UPF0213 family.

The chain is UPF0213 protein YhbQ from Salmonella arizonae (strain ATCC BAA-731 / CDC346-86 / RSK2980).